A 199-amino-acid polypeptide reads, in one-letter code: TATA-box-binding protein (199 aa).

A run of 2 repeats spans residues 10–86 (IENI…VKLL) and 101–177 (IQNI…YNQL).

This sequence belongs to the TBP family.

Functionally, general factor that plays a role in the activation of archaeal genes transcribed by RNA polymerase. Binds specifically to the TATA box promoter element which lies close to the position of transcription initiation. The sequence is that of TATA-box-binding protein from Pyrobaculum calidifontis (strain DSM 21063 / JCM 11548 / VA1).